Reading from the N-terminus, the 376-residue chain is Probable tRNA sulfurtransferase (376 aa).

In terms of domain architecture, THUMP spans 51–152; sequence EENLKNLKYV…KNSVYVFDKS (102 aa). ATP is bound by residues 170–171, 195–196, Arg-252, Gly-274, and Gln-283; these read LI and TF.

It belongs to the ThiI family.

The protein resides in the cytoplasm. The enzyme catalyses [ThiI sulfur-carrier protein]-S-sulfanyl-L-cysteine + a uridine in tRNA + 2 reduced [2Fe-2S]-[ferredoxin] + ATP + H(+) = [ThiI sulfur-carrier protein]-L-cysteine + a 4-thiouridine in tRNA + 2 oxidized [2Fe-2S]-[ferredoxin] + AMP + diphosphate. The catalysed reaction is [ThiS sulfur-carrier protein]-C-terminal Gly-Gly-AMP + S-sulfanyl-L-cysteinyl-[cysteine desulfurase] + AH2 = [ThiS sulfur-carrier protein]-C-terminal-Gly-aminoethanethioate + L-cysteinyl-[cysteine desulfurase] + A + AMP + 2 H(+). It functions in the pathway cofactor biosynthesis; thiamine diphosphate biosynthesis. Functionally, catalyzes the ATP-dependent transfer of a sulfur to tRNA to produce 4-thiouridine in position 8 of tRNAs, which functions as a near-UV photosensor. Also catalyzes the transfer of sulfur to the sulfur carrier protein ThiS, forming ThiS-thiocarboxylate. This is a step in the synthesis of thiazole, in the thiamine biosynthesis pathway. The sulfur is donated as persulfide by IscS. This is Probable tRNA sulfurtransferase from Mycoplasmopsis synoviae (strain 53) (Mycoplasma synoviae).